A 1061-amino-acid chain; its full sequence is Eukaryotic translation initiation factor 3 subunit A (1061 aa).

Residues Gln-114–Val-126 show a composition bias toward polar residues. Positions Gln-114 to Glu-133 are disordered. The 185-residue stretch at Leu-339–Phe-523 folds into the PCI domain. 2 coiled-coil regions span residues Glu-609–Asp-724 and Arg-789–Ala-906. Basic and acidic residues predominate over residues Arg-828–Lys-901. The tract at residues Arg-828 to Gly-1061 is disordered. Pro residues-rich tracts occupy residues Ser-950–Ile-962 and Ala-1000–Arg-1011.

The protein belongs to the eIF-3 subunit A family. In terms of assembly, component of the eukaryotic translation initiation factor 3 (eIF-3) complex.

The protein localises to the cytoplasm. In terms of biological role, RNA-binding component of the eukaryotic translation initiation factor 3 (eIF-3) complex, which is involved in protein synthesis of a specialized repertoire of mRNAs and, together with other initiation factors, stimulates binding of mRNA and methionyl-tRNAi to the 40S ribosome. The eIF-3 complex specifically targets and initiates translation of a subset of mRNAs involved in cell proliferation. The sequence is that of Eukaryotic translation initiation factor 3 subunit A from Chaetomium globosum (strain ATCC 6205 / CBS 148.51 / DSM 1962 / NBRC 6347 / NRRL 1970) (Soil fungus).